A 198-amino-acid chain; its full sequence is Uracil phosphoribosyltransferase homolog (198 aa).

This sequence belongs to the UPRTase family.

Its subcellular location is the plastid. The protein localises to the chloroplast. The chain is Uracil phosphoribosyltransferase homolog from Pyropia yezoensis (Susabi-nori).